A 349-amino-acid chain; its full sequence is Anthranilate phosphoribosyltransferase (349 aa).

5-phospho-alpha-D-ribose 1-diphosphate-binding positions include G82, 85–86, 92–95, 110–118, and S122; these read GD, NVST, and KHGNRAVSG. Anthranilate is bound at residue G82. S94 lines the Mg(2+) pocket. N113 is a binding site for anthranilate. R168 provides a ligand contact to anthranilate. Residues D227 and E228 each contribute to the Mg(2+) site.

This sequence belongs to the anthranilate phosphoribosyltransferase family. As to quaternary structure, homodimer. Mg(2+) serves as cofactor.

It carries out the reaction N-(5-phospho-beta-D-ribosyl)anthranilate + diphosphate = 5-phospho-alpha-D-ribose 1-diphosphate + anthranilate. Its pathway is amino-acid biosynthesis; L-tryptophan biosynthesis; L-tryptophan from chorismate: step 2/5. Catalyzes the transfer of the phosphoribosyl group of 5-phosphorylribose-1-pyrophosphate (PRPP) to anthranilate to yield N-(5'-phosphoribosyl)-anthranilate (PRA). This Pseudomonas syringae pv. tomato (strain ATCC BAA-871 / DC3000) protein is Anthranilate phosphoribosyltransferase.